The sequence spans 191 residues: Fe/S biogenesis protein NfuA (191 aa).

Cys-149 and Cys-152 together coordinate [4Fe-4S] cluster.

The protein belongs to the NfuA family. As to quaternary structure, homodimer. It depends on [4Fe-4S] cluster as a cofactor.

In terms of biological role, involved in iron-sulfur cluster biogenesis. Binds a 4Fe-4S cluster, can transfer this cluster to apoproteins, and thereby intervenes in the maturation of Fe/S proteins. Could also act as a scaffold/chaperone for damaged Fe/S proteins. The protein is Fe/S biogenesis protein NfuA of Citrobacter koseri (strain ATCC BAA-895 / CDC 4225-83 / SGSC4696).